A 284-amino-acid chain; its full sequence is 4-hydroxy-3-methylbut-2-enyl diphosphate reductase (284 aa).

Cys12 contacts [4Fe-4S] cluster. 2 residues coordinate (2E)-4-hydroxy-3-methylbut-2-enyl diphosphate: His40 and His72. The dimethylallyl diphosphate site is built by His40 and His72. Isopentenyl diphosphate is bound by residues His40 and His72. Residue Cys94 participates in [4Fe-4S] cluster binding. Position 122 (His122) interacts with (2E)-4-hydroxy-3-methylbut-2-enyl diphosphate. His122 contacts dimethylallyl diphosphate. An isopentenyl diphosphate-binding site is contributed by His122. The active-site Proton donor is the Glu124. Residue Thr161 coordinates (2E)-4-hydroxy-3-methylbut-2-enyl diphosphate. Cys193 serves as a coordination point for [4Fe-4S] cluster. (2E)-4-hydroxy-3-methylbut-2-enyl diphosphate contacts are provided by Ser221, Asn223, and Ser264. 3 residues coordinate dimethylallyl diphosphate: Ser221, Asn223, and Ser264. Isopentenyl diphosphate contacts are provided by Ser221, Asn223, and Ser264.

The protein belongs to the IspH family. [4Fe-4S] cluster serves as cofactor.

It catalyses the reaction isopentenyl diphosphate + 2 oxidized [2Fe-2S]-[ferredoxin] + H2O = (2E)-4-hydroxy-3-methylbut-2-enyl diphosphate + 2 reduced [2Fe-2S]-[ferredoxin] + 2 H(+). The enzyme catalyses dimethylallyl diphosphate + 2 oxidized [2Fe-2S]-[ferredoxin] + H2O = (2E)-4-hydroxy-3-methylbut-2-enyl diphosphate + 2 reduced [2Fe-2S]-[ferredoxin] + 2 H(+). Its pathway is isoprenoid biosynthesis; dimethylallyl diphosphate biosynthesis; dimethylallyl diphosphate from (2E)-4-hydroxy-3-methylbutenyl diphosphate: step 1/1. It participates in isoprenoid biosynthesis; isopentenyl diphosphate biosynthesis via DXP pathway; isopentenyl diphosphate from 1-deoxy-D-xylulose 5-phosphate: step 6/6. Functionally, catalyzes the conversion of 1-hydroxy-2-methyl-2-(E)-butenyl 4-diphosphate (HMBPP) into a mixture of isopentenyl diphosphate (IPP) and dimethylallyl diphosphate (DMAPP). Acts in the terminal step of the DOXP/MEP pathway for isoprenoid precursor biosynthesis. The chain is 4-hydroxy-3-methylbut-2-enyl diphosphate reductase from Dehalococcoides mccartyi (strain ATCC BAA-2266 / KCTC 15142 / 195) (Dehalococcoides ethenogenes (strain 195)).